Reading from the N-terminus, the 156-residue chain is B3 domain-containing protein At5g26805 (156 aa).

The segment at residues 57 to 155 (KFQLPMEKIR…MFCFSVLDGR (99 aa)) is a DNA-binding region (TF-B3).

The protein localises to the nucleus. The protein is B3 domain-containing protein At5g26805 of Arabidopsis thaliana (Mouse-ear cress).